A 463-amino-acid polypeptide reads, in one-letter code: Glutamate--tRNA ligase 2 (463 aa).

The short motif at 11–21 is the 'HIGH' region element; it reads PSPTGYLHIGG. A 'KMSKS' region motif is present at residues 240–244; the sequence is KLSKR. K243 contributes to the ATP binding site.

Belongs to the class-I aminoacyl-tRNA synthetase family. Glutamate--tRNA ligase type 1 subfamily. As to quaternary structure, monomer.

It is found in the cytoplasm. It catalyses the reaction tRNA(Glu) + L-glutamate + ATP = L-glutamyl-tRNA(Glu) + AMP + diphosphate. Functionally, catalyzes the attachment of glutamate to tRNA(Glu) in a two-step reaction: glutamate is first activated by ATP to form Glu-AMP and then transferred to the acceptor end of tRNA(Glu). This chain is Glutamate--tRNA ligase 2, found in Campylobacter jejuni (strain RM1221).